Reading from the N-terminus, the 21-residue chain is Nigrocin-2 (21 aa).

The cysteines at positions 15 and 21 are disulfide-linked.

In terms of tissue distribution, expressed by the skin dorsal glands.

It localises to the secreted. In terms of biological role, thanks to its single linear amphipathic alpha-helix, may integrate into membrane phospholipids, leading to lysis of the membrane. Shows antibacterial activity against both Gram-positive and Gram-negative bacteria and against the fungus C.albicans. Has no hemolytic activity. The polypeptide is Nigrocin-2 (Pelophylax nigromaculatus (Black-spotted frog)).